The following is a 542-amino-acid chain: CTP synthase (542 aa).

The amidoligase domain stretch occupies residues 1–265; sequence MTKYIFVTGG…LKPISKELSL (265 aa). A CTP-binding site is contributed by S13. S13 is a UTP binding site. Residues 14 to 19 and D71 each bind ATP; that span reads SLGKGI. Residues D71 and E139 each coordinate Mg(2+). Residues 146-148, 186-191, and K222 contribute to the CTP site; these read DIE and KSKPTQ. Residues 186 to 191 and K222 contribute to the UTP site; that span reads KSKPTQ. Residues 290–541 enclose the Glutamine amidotransferase type-1 domain; that stretch reads VLGFVGKYLE…VEATLAISQE (252 aa). Position 352 (G352) interacts with L-glutamine. Catalysis depends on C379, which acts as the Nucleophile; for glutamine hydrolysis. Residues 380-383, E403, and R471 each bind L-glutamine; that span reads LGMQ. Residues H514 and E516 contribute to the active site.

Belongs to the CTP synthase family. Homotetramer.

It catalyses the reaction UTP + L-glutamine + ATP + H2O = CTP + L-glutamate + ADP + phosphate + 2 H(+). It carries out the reaction L-glutamine + H2O = L-glutamate + NH4(+). The enzyme catalyses UTP + NH4(+) + ATP = CTP + ADP + phosphate + 2 H(+). It participates in pyrimidine metabolism; CTP biosynthesis via de novo pathway; CTP from UDP: step 2/2. With respect to regulation, allosterically activated by GTP, when glutamine is the substrate; GTP has no effect on the reaction when ammonia is the substrate. The allosteric effector GTP functions by stabilizing the protein conformation that binds the tetrahedral intermediate(s) formed during glutamine hydrolysis. Inhibited by the product CTP, via allosteric rather than competitive inhibition. Catalyzes the ATP-dependent amination of UTP to CTP with either L-glutamine or ammonia as the source of nitrogen. Regulates intracellular CTP levels through interactions with the four ribonucleotide triphosphates. The chain is CTP synthase from Sulfurimonas denitrificans (strain ATCC 33889 / DSM 1251) (Thiomicrospira denitrificans (strain ATCC 33889 / DSM 1251)).